Consider the following 347-residue polypeptide: NADH-ubiquinone oxidoreductase chain 2 (347 aa).

The next 9 helical transmembrane spans lie at 3–23, 25–45, 67–87, 150–170, 178–198, 201–221, 237–257, 274–294, and 323–343; these read PPIL…VLMS, HWLM…PILM, SMLL…WAVL, NPHL…WGGL, ILAY…TYSP, MLLN…LFMF, LPLI…LPPL, NMII…YFYM, and MTML…TPMM.

This sequence belongs to the complex I subunit 2 family. As to quaternary structure, core subunit of respiratory chain NADH dehydrogenase (Complex I) which is composed of 45 different subunits. Interacts with TMEM242.

It localises to the mitochondrion inner membrane. It catalyses the reaction a ubiquinone + NADH + 5 H(+)(in) = a ubiquinol + NAD(+) + 4 H(+)(out). Its function is as follows. Core subunit of the mitochondrial membrane respiratory chain NADH dehydrogenase (Complex I) which catalyzes electron transfer from NADH through the respiratory chain, using ubiquinone as an electron acceptor. Essential for the catalytic activity and assembly of complex I. In Mustela kathiah (Yellow-bellied weasel), this protein is NADH-ubiquinone oxidoreductase chain 2.